We begin with the raw amino-acid sequence, 354 residues long: Arginase-2, mitochondrial (354 aa).

A mitochondrion-targeting transit peptide spans 1 to 22 (MSLRSHLSRLLRTQVHSVRKKS). Mn(2+) is bound by residues histidine 120, aspartate 143, histidine 145, and aspartate 147. Substrate contacts are provided by residues 145-149 (HADIN), 156-158 (SGN), and aspartate 202. The Mn(2+) site is built by aspartate 251 and aspartate 253. The substrate site is built by threonine 265 and glutamate 296. Positions 332 to 354 (IVYDQLPTPSSPDESESEERVRI) are disordered.

This sequence belongs to the arginase family. In terms of assembly, homotrimer. It depends on Mn(2+) as a cofactor.

Its subcellular location is the mitochondrion. It catalyses the reaction L-arginine + H2O = urea + L-ornithine. Its pathway is nitrogen metabolism; urea cycle; L-ornithine and urea from L-arginine: step 1/1. May play a role in the regulation of extra-urea cycle arginine metabolism and also in down-regulation of nitric oxide synthesis. Extrahepatic arginase functions to regulate L-arginine bioavailability to nitric oxid synthase (NOS). Arginine metabolism is a critical regulator of innate and adaptive immune responses. Seems to be involved in negative regulation of the survival capacity of activated T cells. May suppress inflammation-related signaling in asthmatic airway epithelium. May play a role in promoting prenatal immune suppression. Regulates RPS6KB1 signaling, which promotes endothelial cell senescence and inflammation and implicates NOS3/eNOS dysfunction. Can inhibit endothelial autophagy independently of its enzymatic activity implicating mTORC2 signaling. Involved in vascular smooth muscle cell senescence and apoptosis independently of its enzymatic activity. The protein is Arginase-2, mitochondrial (ARG2) of Bos taurus (Bovine).